A 339-amino-acid chain; its full sequence is Biotin synthase (339 aa).

The 228-residue stretch at 51–278 (SEVELATLLS…KARVRLSAGR (228 aa)) folds into the Radical SAM core domain. Residues cysteine 66, cysteine 70, and cysteine 73 each contribute to the [4Fe-4S] cluster site. Cysteine 110, cysteine 141, cysteine 201, and arginine 273 together coordinate [2Fe-2S] cluster.

The protein belongs to the radical SAM superfamily. Biotin synthase family. Homodimer. [4Fe-4S] cluster is required as a cofactor. It depends on [2Fe-2S] cluster as a cofactor.

The enzyme catalyses (4R,5S)-dethiobiotin + (sulfur carrier)-SH + 2 reduced [2Fe-2S]-[ferredoxin] + 2 S-adenosyl-L-methionine = (sulfur carrier)-H + biotin + 2 5'-deoxyadenosine + 2 L-methionine + 2 oxidized [2Fe-2S]-[ferredoxin]. Its pathway is cofactor biosynthesis; biotin biosynthesis; biotin from 7,8-diaminononanoate: step 2/2. In terms of biological role, catalyzes the conversion of dethiobiotin (DTB) to biotin by the insertion of a sulfur atom into dethiobiotin via a radical-based mechanism. The chain is Biotin synthase from Herminiimonas arsenicoxydans.